Reading from the N-terminus, the 1881-residue chain is Ankyrin-1 (1881 aa).

Residues 1–827 (MPYSVGFREA…EDEGEELISF (827 aa)) form an 89 kDa domain region. ANK repeat units lie at residues 44-73 (NGLNGLHLASKEGHVKMVVELLHKEIILET), 77-106 (KGNTALHIAALAGQDEVVRELVNYGANVNA), 110-139 (KGFTPLYMAAQENHLEVVKFLLENGANQNV), 143-172 (DGFTPLAVALQQGHENVVAHLINYGTKGKV), 174-201 (LPALHIAARNDDTRTAAVLLQNDPNPDV), 205-234 (TGFTPLHIAAHYENLNVAQLLLNRGASVNF), 238-267 (NGITPLHIASRRGNVIMVRLLLDRGAQIET), 271-300 (DELTPLHCAARNGHVRISEILLDHGAPIQA), 304-333 (NGLSPIHMAAQGDHLDCVRLLLQYDAEIDD), 337-366 (DHLTPLHVAAHCGHHRVAKVLLDKGAKPNS), 370-399 (NGFTPLHIACKKNHVRVMELLLKTGASIDA), 403-432 (SGLTPLHVASFMGHLPIVKNLLQRGASPNV), 436-465 (KVETPLHMAARAGHTEVAKYLLQNKAKVNA), 469-498 (DDQTPLHCAARIGHTNMVKLLLENNANPNL), 502-531 (AGHTPLHIAAREGHVETVLALLEKEASQAC), 535-564 (KGFTPLHVAAKYGKVRVAELLLERDAHPNA), 568-597 (NGLTPLHVAVHHNNLDIVKLLLPRGGSPHS), 601-630 (NGYTPLHIAAKQNQVEVARSLLQYGGSANA), 634-663 (QGVTPLHLAAQEGHAEMVALLLSKQANGNL), 667-696 (SGLTPLHLVAQEGHVPVADVLIKHGVMVDA), 700-729 (MGYTPLHVASHYGNIKLVKFLLQHQADVNA), 733-762 (LGYSPLHQAAQQGHTDIVTLLLKNGASPNE), and 766-795 (DGTTPLAIAKRLGYISVTDVLKVVTDETSF). N105 carries the (3S)-3-hydroxyasparagine; by HIF1AN; partial modification. Position 233 is a (3S)-3-hydroxyasparagine; by HIF1AN; partial (N233). At S429 the chain carries Phosphoserine. (3S)-3-hydroxyasparagine; by HIF1AN; partial occurs at positions 431 and 464. (3S)-3-hydroxyasparagine; by HIF1AN; partial occurs at positions 629 and 662. A (3S)-3-hydroxyaspartate; by HIF1AN; partial modification is found at D695. A (3S)-3-hydroxyasparagine; by HIF1AN; partial modification is found at N728. S759 carries the post-translational modification Phosphoserine. N761 bears the (3S)-3-hydroxyasparagine; by HIF1AN; partial mark. S781, S817, S834, and S856 each carry phosphoserine. The interval 875–904 (EEQEQASKEYDEDSLIPSSPATETSDNISP) is disordered. A compositionally biased stretch (polar residues) spans 890-904 (IPSSPATETSDNISP). ZU5 domains are found at residues 913-1068 (FLVS…IMSR) and 1070-1216 (CQDY…LSDC). T961 carries the phosphothreonine modification. Phosphotyrosine is present on Y1073. Position 1082 is a phosphoserine (S1082). A UPA domain region spans residues 1234-1362 (TAVPYMAKFV…QHILCHLNIT (129 aa)). Phosphothreonine occurs at positions 1378 and 1380. The interval 1383-1881 (ALRYSILSES…SKDHTSTPNP (499 aa)) is 55 kDa regulatory domain. Phosphoserine occurs at positions 1390, 1392, and 1396. At T1400 the chain carries Phosphothreonine. The Death domain occupies 1403-1487 (AEMKMAVISE…EIVNMLEGSG (85 aa)). Phosphoserine is present on residues S1428 and S1486. Residues 1486–1510 (SGRQSRNLKPDRRHTDRDYSLSPSQ) are disordered. The span at 1493–1504 (LKPDRRHTDRDY) shows a compositional bias: basic and acidic residues. Phosphoserine is present on residues S1523 and S1533. The tract at residues 1583 to 1613 (SSLECSKAEDSDATGHEWKLEGALSEEPRGP) is disordered. The segment covering 1588-1612 (SKAEDSDATGHEWKLEGALSEEPRG) has biased composition (basic and acidic residues). Residue S1617 is modified to Phosphoserine. Disordered stretches follow at residues 1637 to 1703 (LLEQ…LQDW), 1718 to 1791 (QGSW…EAKN), and 1840 to 1859 (ADAAQEHEEVTVEGPLEDPS). Positions 1642-1658 (EGQRSEEKLPGSKRQDD) are enriched in basic and acidic residues. 5 positions are modified to phosphoserine: S1666, S1671, S1686, S1690, and S1696. A compositionally biased stretch (polar residues) spans 1683 to 1694 (ITHSPTVSQVTE). 2 stretches are compositionally biased toward polar residues: residues 1718–1739 (QGSWQEEVTQGPHSFQGTSTMT) and 1758–1771 (SEHTWTEQPEAESS). A compositionally biased stretch (basic and acidic residues) spans 1772-1781 (QADRDRRQQG).

Component of the ankyrin-1 complex in the erythrocyte, composed of ANK1, RHCE, RHAG, SLC4A1, EPB42, GYPA, GYPB and AQP1. Interacts with a number of integral membrane proteins and cytoskeletal proteins. Interacts (via N-terminus) with SPTB/spectrin (beta chain). Also interacts with TTN/titin. Isoform Mu17 interacts with OBSCN isoform 3/obscurin. Interacts with HIF1AN. Interacts (via ANK 1-5 repeats) with RHCE; this interaction mediates the primary membrane attachment site for ANK1. Interacts (via ANK 1-2 repeats) with AQP1 (via the N-terminal). Interacts (via ANK 1-13 repeats) with EPB42. Interacts directly with SLC4A1 (via the cytoplasmic domain); this interaction is mediated by the SLC4A1 Band 3-II and Band 3-III dimers. Post-translationally, regulated by phosphorylation. In terms of processing, palmitoylated. Hydroxylated by HIF1AN at several asparagine and 1 aspartate residue within ANK repeat region. Hydroxylation seems to increase the conformational stability of this region and may also modulate protein-protein interactions mediated by the ANK repeat region. Post-translationally, (Microbial infection) Probably cleaved by P.falciparum SERA6; the cleavage probably causes the disruption of the actin cytoskeleton and the rupture of the erythrocyte cell membrane releasing the merozoites. In terms of tissue distribution, isoform Mu17, isoform Mu18, isoform Mu19 and isoform Mu20 are expressed in skeletal muscle. Isoform Br21 is expressed in brain.

The protein resides in the cytoplasm. It localises to the cytoskeleton. It is found in the membrane. Its subcellular location is the myofibril. The protein localises to the sarcomere. The protein resides in the m line. It localises to the sarcoplasmic reticulum. In terms of biological role, component of the ankyrin-1 complex, a multiprotein complex involved in the stability and shape of the erythrocyte membrane. Attaches integral membrane proteins to cytoskeletal elements; binds to the erythrocyte membrane protein band 4.2, to Na-K ATPase, to the lymphocyte membrane protein GP85, and to the cytoskeletal proteins fodrin, tubulin, vimentin and desmin. Erythrocyte ankyrins also link spectrin (beta chain) to the cytoplasmic domain of the erythrocytes anion exchange protein; they retain most or all of these binding functions. Together with obscurin in skeletal muscle may provide a molecular link between the sarcoplasmic reticulum and myofibrils. The sequence is that of Ankyrin-1 from Homo sapiens (Human).